The following is a 126-amino-acid chain: Protein ApaG (126 aa).

The 125-residue stretch at 2–126 (SDPRYQVDVS…FRLAVPGALH (125 aa)) folds into the ApaG domain.

The sequence is that of Protein ApaG from Pseudomonas fluorescens (strain ATCC BAA-477 / NRRL B-23932 / Pf-5).